Here is a 777-residue protein sequence, read N- to C-terminus: MTSDWDEIKRLAADFQKAQLSTSLQRLSERNCVEVVSLLIEKGLLEVIFTTDGKEYLTQAHLAQEVKDELFVQGGRVNLVDLAKTLNVDFDRVQRVAEQVVQEDPSVKFVLGQLLDVSYFERVAMEVNEKLAQAGEINVADLTMQYDLPADFILSNIVLKYLNKIIMGKQDASNANIFFTQSYVTRSKAKIRGALAAITKPTPVSAILAQCGIPDRLFNMLVNEVATLGSVTSRSPGAQYIPHIYRKTQVDWVQNFYRQNGYLEHDSVAGLGVTDVKNFITNQLPEAKIIHLKKCSVGEKLIDQVVASLEECLSSNTYLDVSTILPSIMTDEDIDQLLSMVLTAAMQKQTLIFGSTILTTKFVDDIIKPCYGIAEEHAKRSVDSGSYQQYMAEKLMKHQDPMDRDSAVGEGKADKREERRKKAAGGKGGGGTQGRETKTKSTKKHVRGQKGNVSDSDDDMPSGGKKGGKDAVIELITTKEIAKVLEAGLEPEGLEDLSKQLAQHYYPQFSKLALAKAHQLYEISLHQSNQNRRQTHASLQDKLNNLYNDIRLYEKGIKLFPADVQPQLVKYLLKSLGTDFSNEICFYVAAECNLNSNGTTLTVEQRNKIVQECSQEYKSALQALNKAVFSSASIDDFLDVAESALQACSMILKKIDKKKDRNLILCHKHGLLEQLANCSDPALVLHLAVLIIFTICTQSMLHASGRHVSSILSFLQPQLSPEQAQTLTSYHDLVLKLLSAEGSSSNVDDITKQLEDLTPTVKSIASSFKKSGVTSAE.

Residues 396–417 (MKHQDPMDRDSAVGEGKADKRE) are compositionally biased toward basic and acidic residues. Positions 396 to 470 (MKHQDPMDRD…PSGGKKGGKD (75 aa)) are disordered.

Belongs to the UFL1 family.

Functionally, E3 UFM1-protein ligase that mediates ufmylation of target proteins. The polypeptide is E3 UFM1-protein ligase 1 homolog (Aedes aegypti (Yellowfever mosquito)).